Reading from the N-terminus, the 341-residue chain is Adenylosuccinate synthetase (341 aa).

Residues 12-18 (GDEGKGK) and 42-44 (GHS) each bind GTP. The active-site Proton acceptor is D13. 2 residues coordinate Mg(2+): D13 and G42. IMP contacts are provided by residues 13–16 (DEGK), 40–43 (NAGH), T127, R141, Q179, T194, and R256. H43 functions as the Proton donor in the catalytic mechanism. Substrate is bound at residue 252–258 (VVTGRKR). GTP contacts are provided by residues R258, 284–286 (CID), and 324–326 (STG).

Belongs to the adenylosuccinate synthetase family. As to quaternary structure, homodimer. Requires Mg(2+) as cofactor.

It localises to the cytoplasm. It carries out the reaction IMP + L-aspartate + GTP = N(6)-(1,2-dicarboxyethyl)-AMP + GDP + phosphate + 2 H(+). It functions in the pathway purine metabolism; AMP biosynthesis via de novo pathway; AMP from IMP: step 1/2. Functionally, plays an important role in the de novo pathway of purine nucleotide biosynthesis. Catalyzes the first committed step in the biosynthesis of AMP from IMP. This Methanosphaera stadtmanae (strain ATCC 43021 / DSM 3091 / JCM 11832 / MCB-3) protein is Adenylosuccinate synthetase.